Here is a 147-residue protein sequence, read N- to C-terminus: Hemoglobin subunit beta-1 (147 aa).

In terms of domain architecture, Globin spans 3–147 (HWTDFERSTI…VVFSLGKQYH (145 aa)). Residues histidine 64 and histidine 93 each coordinate heme b.

This sequence belongs to the globin family. Hb1 is a heterotetramer of two alpha-1 chains and two beta-1 chains. As to expression, red blood cells.

In terms of biological role, involved in oxygen transport from gills to the various peripheral tissues. This is Hemoglobin subunit beta-1 from Liparis tunicatus (Kelp snailfish).